The sequence spans 514 residues: 2,3-bisphosphoglycerate-independent phosphoglycerate mutase (514 aa).

Positions 14 and 64 each coordinate Mn(2+). Ser64 acts as the Phosphoserine intermediate in catalysis. Substrate is bound by residues His125, 155–156, Arg187, Arg193, 263–266, and Lys336; these read RD and RADR. The Mn(2+) site is built by Asp403, His407, Asp444, His445, and His463.

This sequence belongs to the BPG-independent phosphoglycerate mutase family. Monomer. Mn(2+) is required as a cofactor.

It carries out the reaction (2R)-2-phosphoglycerate = (2R)-3-phosphoglycerate. It functions in the pathway carbohydrate degradation; glycolysis; pyruvate from D-glyceraldehyde 3-phosphate: step 3/5. Functionally, catalyzes the interconversion of 2-phosphoglycerate and 3-phosphoglycerate. The sequence is that of 2,3-bisphosphoglycerate-independent phosphoglycerate mutase from Shewanella baltica (strain OS185).